A 200-amino-acid chain; its full sequence is WASH complex subunit 3 (200 aa).

Residues 56 to 76 (SLRIQQIETTLSILEAKLASI) are a coiled coil. 2 disordered regions span residues 87 to 130 (VRAP…AENI) and 165 to 200 (DPNL…SFSD).

It belongs to the CCDC53 family. Component of the WASH complex.

In Danio rerio (Zebrafish), this protein is WASH complex subunit 3.